The chain runs to 315 residues: NADH-cytochrome b5 reductase-like (315 aa).

An Oxidoreductase-like domain is found at 19–55; that stretch reads RPTEPLPSQCCGSGCSPCVFDLYHRDLARWEAAQASK. The FAD-binding FR-type domain maps to 75-177; sequence ETFVAFCIIA…RGPFGDFFYK (103 aa). FAD is bound by residues 157-172 and 182-214; these read ESWRVGDTAFWRGPFG and GELLLLAAGTGLAPMVPILQSITDNENDETFVT.

The protein belongs to the flavoprotein pyridine nucleotide cytochrome reductase family. FAD serves as cofactor.

It catalyses the reaction 2 Fe(III)-[cytochrome b5] + NADH = 2 Fe(II)-[cytochrome b5] + NAD(+) + H(+). Its function is as follows. NADH-cytochrome b5 reductases are involved in desaturation and elongation of fatty acids, cholesterol biosynthesis, drug metabolism, and, in erythrocyte, methemoglobin reduction. The protein is NADH-cytochrome b5 reductase-like (CYB5RL) of Homo sapiens (Human).